The sequence spans 187 residues: MLQVLPADAAELVEQGGVIAYPTEAVYGLGCDPDNDEAINQLLQIKQRPWQKGLILVAGDYQQLLPYIDESQLNAQQLAFAQSKWPGPFTFIMPVKPGLSKLLSGAFDSIAVRVTAHAGVKALCAAIHKPIVSTSANLSGQEPALSPLAVKQQFEGIISGLVVGELGSQASPSTIIDARSGTVIREG.

A YrdC-like domain is found at 3–187; the sequence is QVLPADAAEL…ARSGTVIREG (185 aa).

It belongs to the SUA5 family. TsaC subfamily.

The protein localises to the cytoplasm. It carries out the reaction L-threonine + hydrogencarbonate + ATP = L-threonylcarbamoyladenylate + diphosphate + H2O. In terms of biological role, required for the formation of a threonylcarbamoyl group on adenosine at position 37 (t(6)A37) in tRNAs that read codons beginning with adenine. Catalyzes the conversion of L-threonine, HCO(3)(-)/CO(2) and ATP to give threonylcarbamoyl-AMP (TC-AMP) as the acyladenylate intermediate, with the release of diphosphate. This Shewanella pealeana (strain ATCC 700345 / ANG-SQ1) protein is Threonylcarbamoyl-AMP synthase.